We begin with the raw amino-acid sequence, 237 residues long: Ribosomal RNA small subunit methyltransferase G (237 aa).

S-adenosyl-L-methionine contacts are provided by residues Gly75, Phe80, 127–128 (AE), and Arg146.

It belongs to the methyltransferase superfamily. RNA methyltransferase RsmG family.

It localises to the cytoplasm. Its function is as follows. Specifically methylates the N7 position of a guanine in 16S rRNA. The chain is Ribosomal RNA small subunit methyltransferase G from Synechococcus sp. (strain RCC307).